The primary structure comprises 451 residues: Glucose-6-phosphate isomerase (451 aa).

Glutamate 291 acts as the Proton donor in catalysis. Catalysis depends on residues histidine 312 and lysine 426.

It belongs to the GPI family.

The protein resides in the cytoplasm. The enzyme catalyses alpha-D-glucose 6-phosphate = beta-D-fructose 6-phosphate. Its pathway is carbohydrate biosynthesis; gluconeogenesis. It participates in carbohydrate degradation; glycolysis; D-glyceraldehyde 3-phosphate and glycerone phosphate from D-glucose: step 2/4. In terms of biological role, catalyzes the reversible isomerization of glucose-6-phosphate to fructose-6-phosphate. The protein is Glucose-6-phosphate isomerase of Caldanaerobacter subterraneus subsp. tengcongensis (strain DSM 15242 / JCM 11007 / NBRC 100824 / MB4) (Thermoanaerobacter tengcongensis).